The following is a 577-amino-acid chain: Proline--tRNA ligase (577 aa).

The protein belongs to the class-II aminoacyl-tRNA synthetase family. ProS type 1 subfamily. In terms of assembly, homodimer.

It is found in the cytoplasm. It catalyses the reaction tRNA(Pro) + L-proline + ATP = L-prolyl-tRNA(Pro) + AMP + diphosphate. Functionally, catalyzes the attachment of proline to tRNA(Pro) in a two-step reaction: proline is first activated by ATP to form Pro-AMP and then transferred to the acceptor end of tRNA(Pro). As ProRS can inadvertently accommodate and process non-cognate amino acids such as alanine and cysteine, to avoid such errors it has two additional distinct editing activities against alanine. One activity is designated as 'pretransfer' editing and involves the tRNA(Pro)-independent hydrolysis of activated Ala-AMP. The other activity is designated 'posttransfer' editing and involves deacylation of mischarged Ala-tRNA(Pro). The misacylated Cys-tRNA(Pro) is not edited by ProRS. The sequence is that of Proline--tRNA ligase from Helicobacter pylori (strain Shi470).